The sequence spans 297 residues: Transcription factor MYB1R1 (297 aa).

Residues 44–96 (DLSQYEHPNANNNNNGGDNNESSKVAQDEGYASADDAVQHQSNSGRERKRGVP) form a disordered region. The segment covering 52-63 (NANNNNNGGDNN) has biased composition (low complexity). Positions 89–145 (RERKRGVPWTEEEHKLFLLGLQKVGKGDWRGISRNFVKTRTPTQVASHAQKYFLRRS) constitute an HTH myb-type domain. A DNA-binding region (H-T-H motif) is located at residues 117-141 (WRGISRNFVKTRTPTQVASHAQKYF).

It is found in the nucleus. The protein localises to the cytoplasm. Its subcellular location is the cytosol. In terms of biological role, binds selectively to the DNA sequence 5'-[GA]GATAA-3' and may act as a transcription factor involved in the regulation of drought-responsive genes. Enhances stomatal closure in response to abscisic acid (ABA). Confers drought and salt tolerance. The polypeptide is Transcription factor MYB1R1 (Solanum tuberosum (Potato)).